The primary structure comprises 206 residues: Large ribosomal subunit protein uL4 (206 aa).

The tract at residues 63–85 (MYKQKGTGSARHGSARAPQFRGG) is disordered.

The protein belongs to the universal ribosomal protein uL4 family. Part of the 50S ribosomal subunit.

In terms of biological role, one of the primary rRNA binding proteins, this protein initially binds near the 5'-end of the 23S rRNA. It is important during the early stages of 50S assembly. It makes multiple contacts with different domains of the 23S rRNA in the assembled 50S subunit and ribosome. Forms part of the polypeptide exit tunnel. The chain is Large ribosomal subunit protein uL4 from Beijerinckia indica subsp. indica (strain ATCC 9039 / DSM 1715 / NCIMB 8712).